Consider the following 205-residue polypeptide: Cbp/p300-interacting transactivator 3 (205 aa).

The protein belongs to the CITED family.

It localises to the nucleus. Its function is as follows. Acts as a transcriptional coactivator. Enhances estrogen-dependent transactivation mediated by estrogen receptors. This Gallus gallus (Chicken) protein is Cbp/p300-interacting transactivator 3 (CITED3).